We begin with the raw amino-acid sequence, 98 residues long: HssA/B-like protein 36 (98 aa).

Residues 1-29 form a disordered region; that stretch reads MTLFSSISSISNPMTSSKSSISSFGSGTS.

The protein belongs to the hssA/B family.

The sequence is that of HssA/B-like protein 36 (hssl36) from Dictyostelium discoideum (Social amoeba).